Consider the following 1155-residue polypeptide: MDNNPNINECIPYNCLSNPEVEVLGGERIETGYTPIDISLSLTQFLLSEFVPGAGFVLGLVDIIWGIFGPSQWDAFLVQIEQLINQRIEEFARNQAISRLEGLSNLYQIYAESFREWEADPTNPALREEMRIQFNDMNSALTTAIPLFAVQNYQVPLLSVYVQAANLHLSVLRDVSVFGQRWGFDAATINSRYNDLTRLIGNYTDHAVRWYNTGLERVWGPDSRDWIRYNQFRRELTLTVLDIVSLFPNYDSRTYPIRTVSQLTREIYTNPVLENFDGSFRGSAQGIEGSIRSPHLMDILNSITIYTDAHRGEYYWSGHQIMASPVGFSGPEFTFPLYGTMGNAAPQQRIVAQLGQGVYRTLSSTLYRRPFNIGINNQQLSVLDGTEFAYGTSSNLPSAVYRKSGTVDSLDEIPPQNNNVPPRQGFSHRLSHVSMFRSGFSNSSVSIIRAPMFSWIHRSAEFNNIIPSSQITQIPLTKSTNLGSGTSVVKGPGFTGGDILRRTSPGQISTLRVNITAPLSQRYRVRIRYASTTNLQFHTSIDGRPINQGNFSATMSSGSNLQSGSFRTVGFTTPFNFSNGSSVFTLSAHVFNSGNEVYIDRIEFVPAEVTFEAEYDLERAQKAVNELFTSSNQIGLKTDVTDYHIDQVSNLVECLSDEFCLDEKKELSEKVKHAKRLSDERNLLQDPNFRGINRQLDRGWRGSTDITIQGGDDVFKENYVTLLGTFDECYPTYLYQKIDESKLKAYTRYQLRGYIEDSQDLEIYLIRYNAKHETVNVPGTGSLWPLSAPSPIGKCAHHSHHFSLDIDVGCTDLNEDLGVWVIFKIKTQDGHARLGNLEFLEEKPLVGEALARVKRAEKKWRDKREKLEWETNIVYKEAKESVDALFVNSQYDRLQADTNIAMIHAADKRVHSIREAYLPELSVIPGVNAAIFEELEGRIFTAFSLYDARNVIKNGDFNNGLSCWNVKGHVDVEEQNNHRSVLVVPEWEAEVSQEVRVCPGRGYILRVTAYKEGYGEGCVTIHEIENNTDELKFSNCVEEEVYPNNTVTCNDYTATQEEYEGTYTSRNRGYDGAYESNSSVPADYASAYEEKAYTDGRRDNPCESNRGYGDYTPLPAGYVTKELEYFPETDKVWIEIGETEGTFIVDSVELLLMEE.

It belongs to the delta endotoxin family.

Its function is as follows. Promotes colloidosmotic lysis by binding to the midgut epithelial cells of many lepidopteran larvae. The protein is Pesticidal crystal protein Cry1Ab (cry1Ab) of Bacillus thuringiensis subsp. aizawai.